Consider the following 348-residue polypeptide: Histidinol-phosphate aminotransferase (348 aa).

Residue lysine 207 is modified to N6-(pyridoxal phosphate)lysine.

This sequence belongs to the class-II pyridoxal-phosphate-dependent aminotransferase family. Histidinol-phosphate aminotransferase subfamily. As to quaternary structure, homodimer. Pyridoxal 5'-phosphate is required as a cofactor.

It carries out the reaction L-histidinol phosphate + 2-oxoglutarate = 3-(imidazol-4-yl)-2-oxopropyl phosphate + L-glutamate. It participates in amino-acid biosynthesis; L-histidine biosynthesis; L-histidine from 5-phospho-alpha-D-ribose 1-diphosphate: step 7/9. This is Histidinol-phosphate aminotransferase from Crocosphaera subtropica (strain ATCC 51142 / BH68) (Cyanothece sp. (strain ATCC 51142)).